Consider the following 143-residue polypeptide: Cofilin (143 aa).

One can recognise an ADF-H domain in the interval 5–137; that stretch reads GVAVADESLN…AYESVLEKVS (133 aa).

Belongs to the actin-binding proteins ADF family.

It is found in the cytoplasm. The protein localises to the cytoskeleton. Its subcellular location is the nucleus matrix. Its function is as follows. Controls reversibly actin polymerization and depolymerization in a pH-sensitive manner. It has the ability to bind G- and F-actin in a 1:1 ratio of cofilin to actin. Binding to F-actin is regulated by tropomyosin. It is the major component of intranuclear and cytoplasmic actin rods. Required for accumulation of actin at the cell division site via depolymerizing actin at the cell ends. In association with myosin II has a role in the assembly of the contractile ring via severing actin filaments. Involved in the maintenance of the contractile ring once formed. In association with profilin and capping protein, has a role in the mitotic reorganization of the actin cytoskeleton. The chain is Cofilin (COF1) from Kluyveromyces lactis (strain ATCC 8585 / CBS 2359 / DSM 70799 / NBRC 1267 / NRRL Y-1140 / WM37) (Yeast).